Reading from the N-terminus, the 607-residue chain is Pescadillo homolog (607 aa).

The interval 301–341 (ANVVEQSEKTTEDADEEPETEENLDEFKPADGADNEDSKSL) is disordered. Acidic residues predominate over residues 313-324 (DADEEPETEENL). Residues 325–339 (DEFKPADGADNEDSK) are compositionally biased toward basic and acidic residues. Residues 348 to 441 (SNTSLFSNFT…ILERTDLYAC (94 aa)) enclose the BRCT domain. Residues 497-604 (ENVEQIDDAE…RDIEKRKKLK (108 aa)) adopt a coiled-coil conformation. The tract at residues 531–607 (QNSKSAKKTK…EKRKKLKVEN (77 aa)) is disordered. Basic and acidic residues-rich tracts occupy residues 544 to 561 (RDTLTAEEKEEKEAKELS) and 595 to 607 (RDIEKRKKLKVEN).

This sequence belongs to the pescadillo family. In terms of assembly, component of the NOP7 complex, composed of erb1/SPBC4F6.13c, ppp1/SPBC19F5.05c and ytm1/SPAC890.04c. Within the NOP7 complex erb1/SPBC4F6.13c appears to interact directly with ppp1/SPBC19F5.05c and ytm1/SPAC890.04c. The NOP7 complex also associates with the 66S pre-ribosome.

It localises to the nucleus. Its subcellular location is the nucleoplasm. The protein localises to the nucleolus. In terms of biological role, component of the NOP7 complex, which is required for maturation of the 25S and 5.8S ribosomal RNAs and formation of the 60S ribosome. This chain is Pescadillo homolog (ppp1), found in Schizosaccharomyces pombe (strain 972 / ATCC 24843) (Fission yeast).